The sequence spans 313 residues: WD repeat-containing protein 82-B (313 aa).

WD repeat units follow at residues 19–58, 105–144, 146–184, 192–231, 236–276, and 280–313; these read ENSD…PKRT, GHSK…CQGL, HLQG…KGPF, DRTC…VMHT, NNSK…KVAV, and KHTG…TIDD.

This sequence belongs to the WD repeat SWD2 family. As to quaternary structure, component of the SET1/COMPASS complex. Component of the PNUTS-PP1 phosphatase complex.

The protein resides in the nucleus. It is found in the chromosome. It localises to the cytoplasm. Regulatory component of the SET1/COMPASS complex implicated in the tethering of this complex to transcriptional start sites of active genes. Facilitates histone H3 'Lys-4' methylation (H3K4me) via recruitment of the SETD1A or SETD1B to the 'Ser-5' phosphorylated C-terminal domain (CTD) of RNA polymerase II large subunit (POLR2A). Component of the PNUTS-PP1 protein phosphatase complex, a protein phosphatase 1 (PP1) complex that promotes RNA polymerase II transcription pause-release, allowing transcription elongation. The sequence is that of WD repeat-containing protein 82-B (wdr82-b) from Xenopus laevis (African clawed frog).